The chain runs to 64 residues: Sperm protamine P1 (64 aa).

Residues M1–Y64 are disordered.

It belongs to the protamine P1 family. Testis.

It localises to the nucleus. It is found in the chromosome. Functionally, protamines substitute for histones in the chromatin of sperm during the haploid phase of spermatogenesis. They compact sperm DNA into a highly condensed, stable and inactive complex. The sequence is that of Sperm protamine P1 (PRM1) from Hypsiprymnodon moschatus (Musky rat kangaroo).